Reading from the N-terminus, the 136-residue chain is Urease subunit beta (136 aa).

Positions 113-136 (NDEYAGVFGDNGAENVNKKGRKRS) are disordered.

The protein belongs to the urease beta subunit family. As to quaternary structure, heterotrimer of UreA (gamma), UreB (beta) and UreC (alpha) subunits. Three heterotrimers associate to form the active enzyme.

It localises to the cytoplasm. The enzyme catalyses urea + 2 H2O + H(+) = hydrogencarbonate + 2 NH4(+). It functions in the pathway nitrogen metabolism; urea degradation; CO(2) and NH(3) from urea (urease route): step 1/1. This is Urease subunit beta from Staphylococcus aureus (strain Newman).